A 199-amino-acid chain; its full sequence is Pyrrolidone-carboxylate peptidase (199 aa).

Catalysis depends on residues Glu-80, Cys-142, and His-166.

The protein belongs to the peptidase C15 family. As to quaternary structure, homotetramer.

Its subcellular location is the cytoplasm. The catalysed reaction is Release of an N-terminal pyroglutamyl group from a polypeptide, the second amino acid generally not being Pro.. Removes 5-oxoproline from various penultimate amino acid residues except L-proline. The protein is Pyrrolidone-carboxylate peptidase of Oceanobacillus iheyensis (strain DSM 14371 / CIP 107618 / JCM 11309 / KCTC 3954 / HTE831).